The primary structure comprises 172 residues: MLSSLQNPRQAAAQLMNFGLILSTAFMMWKGLSVITDSPSPIVVVLSGSMEPAFQRGDLLLLWNRNLISETNVGEIVVYNVKGKDIPIVHRIVRKFGVGPDAKLLTKGDNNAADDTELYARGQDYLNRKDIVGSVVGYMPFVGYVTIMLSEHPWLKTVMLGIMGLVVVLQRE.

Residues 1 to 14 lie on the Cytoplasmic side of the membrane; that stretch reads MLSSLQNPRQAAAQ. Residues 15–35 traverse the membrane as a helical; Signal-anchor for type II membrane protein segment; that stretch reads LMNFGLILSTAFMMWKGLSVI. Topologically, residues 36–172 are lumenal; that stretch reads TDSPSPIVVV…MGLVVVLQRE (137 aa). Catalysis depends on charge relay system residues serine 49, histidine 90, and aspartate 115. Residues 158-169 are C-terminal short (CTS) helix; it reads VMLGIMGLVVVL.

Belongs to the peptidase S26B family. In terms of assembly, component of the signal peptidase complex (SPC) composed of a catalytic subunit SEC11 and three accessory subunits SPC1, SPC2 and SPC3. The complex induces a local thinning of the ER membrane which is used to measure the length of the signal peptide (SP) h-region of protein substrates. This ensures the selectivity of the complex towards h-regions shorter than 18-20 amino acids. SPC associates with the translocon complex.

It is found in the endoplasmic reticulum membrane. It carries out the reaction Cleavage of hydrophobic, N-terminal signal or leader sequences from secreted and periplasmic proteins.. Functionally, catalytic component of the signal peptidase complex (SPC) which catalyzes the cleavage of N-terminal signal sequences from nascent proteins as they are translocated into the lumen of the endoplasmic reticulum. Specifically cleaves N-terminal signal peptides that contain a hydrophobic alpha-helix (h-region) shorter than 18-20 amino acids. The chain is Signal peptidase complex catalytic subunit SEC11 (SEC11) from Chaetomium globosum (strain ATCC 6205 / CBS 148.51 / DSM 1962 / NBRC 6347 / NRRL 1970) (Soil fungus).